Consider the following 335-residue polypeptide: MDVDAAVVKRIALWVYETCSVFNLFYCITLSLAIKTSKNNALPATYIYNMAISNALLVIFGIMVYILPYYMSDKTYKTYRDSIGAMISVGVTFNYLHPMLTLILMTINRIAVVVSMQASQLFTSSKIWLYTSFHMTANFACLIIPYLSECRINYDIRKVGFISECAPDRHQITTFSNYYSVFFPFVAFFFNVLVIINFKLQRSPTYTKIKNMFRRGNGDQFTSMPSDVLKAKKKTERMLMIQAFITAFYLSVYELTSLVLRVVPELFGNLSLDGKLAFTYFRLAQVPCHVFLVYFIFTPVTRKIYMDFVRERVFCMKPAKKKTIKVSATTTSTKK.

Over 1–10 (MDVDAAVVKR) the chain is Extracellular. The helical transmembrane segment at 11–31 (IALWVYETCSVFNLFYCITLS) threads the bilayer. At 32–46 (LAIKTSKNNALPATY) the chain is on the cytoplasmic side. A helical transmembrane segment spans residues 47-67 (IYNMAISNALLVIFGIMVYIL). Topologically, residues 68–82 (PYYMSDKTYKTYRDS) are extracellular. A helical membrane pass occupies residues 83 to 103 (IGAMISVGVTFNYLHPMLTLI). Topologically, residues 104–126 (LMTINRIAVVVSMQASQLFTSSK) are cytoplasmic. Residues 127–147 (IWLYTSFHMTANFACLIIPYL) form a helical membrane-spanning segment. Residues 148-177 (SECRINYDIRKVGFISECAPDRHQITTFSN) lie on the Extracellular side of the membrane. Residues 178–198 (YYSVFFPFVAFFFNVLVIINF) form a helical membrane-spanning segment. Topologically, residues 199 to 238 (KLQRSPTYTKIKNMFRRGNGDQFTSMPSDVLKAKKKTERM) are cytoplasmic. Residues 239 to 259 (LMIQAFITAFYLSVYELTSLV) traverse the membrane as a helical segment. Topologically, residues 260–276 (LRVVPELFGNLSLDGKL) are extracellular. Residues 277–297 (AFTYFRLAQVPCHVFLVYFIF) traverse the membrane as a helical segment. Topologically, residues 298–319 (TPVTRKIYMDFVRERVFCMKPA) are cytoplasmic.

It belongs to the nematode receptor-like protein srxa family.

The protein localises to the membrane. This chain is Serpentine receptor class XA 10 (srxa-10), found in Caenorhabditis elegans.